The following is a 423-amino-acid chain: Probable WRKY transcription factor 58 (423 aa).

3 disordered regions span residues 91–128 (SSAH…AVHG), 142–171 (RNHY…DGYN), and 215–284 (IYKG…GVST). 2 stretches are compositionally biased toward low complexity: residues 99–111 (QPRQ…PQRP) and 144–162 (HYNN…VVNV). A DNA-binding region (WRKY 1) is located at residues 161-225 (NVDKPADDGY…YKGQHDHERP (65 aa)). Positions 259–271 (DDDDDDDEDDEDL) are enriched in acidic residues. The WRKY 2 DNA-binding region spans 300–365 (SEVDLLDDGY…YEGKHNHDVP (66 aa)).

The protein localises to the nucleus. Functionally, transcription factor. Interacts specifically with the W box (5'-(T)TGAC[CT]-3'), a frequently occurring elicitor-responsive cis-acting element. This is Probable WRKY transcription factor 58 (WRKY58) from Arabidopsis thaliana (Mouse-ear cress).